A 166-amino-acid chain; its full sequence is MRAFATNVCTGPVDVLINNAGVSGLWCALGDVDYADMARTFTINALGPLRVTSAMLPGLRQGALRRVAHVTSRMGSLAANTDGGAYAYRMSKAALNMAVRSMSTDLRPEGFVTVLLHPGWVQTDMGGPDATLPAPDSVRGMLRVIDGLNPEHSGRFFDYQGTEVPW.

Post-translationally, the mature C-signal (p17) is derived from the precursor sequence (p25) by proteolytic cleavage. The subtilisin-like protease PopC is directly responsible for cleavage of p25 to p17. The cleavage site is probably located between amino acid residues 60 and 68 in p25.

It localises to the secreted. It is found in the cell outer membrane. With respect to regulation, synthesized as a precursor protein (p25), which is cleaved after secretion to generate the mature active C-signal (p17). The p25 precursor purified from M.xanthus cells does not display C-signal activity. In terms of biological role, cell-cell signaling protein required for fruiting body formation, a multicellular developmental program that is induced in response to starvation. Necessary for rippling, cellular aggregation, spore differentiation and for gene expression that is initiated after 6 hours of starvation. In starving cells, the C-signal directly induces aggregation and sporulation, which are induced at distinct threshold levels of C-signaling. Contact with C-signaling induces cells to glide with high speed and low stop and reversal frequencies toward aggregation centers. The C-signal acts as a morphogen and induces distinct events at distinct threshold levels. A regulated increase in the level of C-signaling during development ensures the correct temporal order of aggregation and sporulation. This chain is C-signal, found in Myxococcus xanthus.